Consider the following 160-residue polypeptide: Protein CrtK (160 aa).

Helical transmembrane passes span 3–23, 37–57, 76–96, 101–121, and 129–149; these read LTLFAVYFVACACAGATGAIF, WVPPNWLFPVAWSTLYILMSI, LAFWAVQIAVNTLWTPIFFGL, GGMLVLVLLWLSVFATCVLFW, and LMFVPYVIWVTVAGALNFSVW.

Belongs to the TspO/BZRP family.

Its subcellular location is the cell inner membrane. It functions in the pathway carotenoid biosynthesis; spheroidene biosynthesis. This Rhodobacter capsulatus (strain ATCC BAA-309 / NBRC 16581 / SB1003) protein is Protein CrtK (crtK).